The chain runs to 226 residues: E3 ubiquitin-protein ligase RNF186 (226 aa).

The RING-type zinc finger occupies 39-85; sequence CLVCREPYSGVRPPKLLGCQHAFCAVCLKLLLCVQDDAWSIPCPLCR. Positions 121–143 are disordered; sequence GLANPATLTAGQPREAGEEEQDA. 2 helical membrane passes run 157–177 and 179–199; these read HLLL…PGVI and WVLS…CSHP.

As to quaternary structure, interacts with BNIP1. Post-translationally, polyubiquitinated. 'Lys-29' autoubiquitination leads to proteasomal degradation.

The protein resides in the endoplasmic reticulum membrane. It catalyses the reaction S-ubiquitinyl-[E2 ubiquitin-conjugating enzyme]-L-cysteine + [acceptor protein]-L-lysine = [E2 ubiquitin-conjugating enzyme]-L-cysteine + N(6)-ubiquitinyl-[acceptor protein]-L-lysine.. Its pathway is protein modification; protein ubiquitination. E3 ubiquitin protein ligase that is part of an apoptotic signaling pathway activated by endoplasmic reticulum stress. Stimulates the expression of proteins specific of the unfolded protein response (UPR), ubiquitinates BNIP1 and regulates its localization to the mitochondrion and induces calcium release from the endoplasmic reticulum that ultimately leads to cell apoptosis. Plays a role in the maintenance of intestinal homeostasis and clearance of enteric pathogens. Upon NOD2 stimulation, ubiquitinates the ER stress sensor activating transcription factor 6/ATF6 and promotes the unfolded protein response UPR. Participates in basal level of autophagy maintenance by regulating the ubiquitination of EPHB2. Upon stimulation by ligand EFNB1, ubiquitinates EPHB2 and further recruits MAP1LC3B for autophagy induction. Controls nutrient sensing by ubiquitinating Sestrin-2/SESN2, which is an intracellular sensor of cytosolic leucine and inhibitor of mTORC1 activity. This Bos taurus (Bovine) protein is E3 ubiquitin-protein ligase RNF186.